The following is a 246-amino-acid chain: Chemokine-binding protein (246 aa).

Residues 108-125 are compositionally biased toward polar residues; sequence SESSDGNTVNTRLSSVSP. Residues 108–132 form a disordered region; the sequence is SESSDGNTVNTRLSSVSPGQGKDSP.

It belongs to the orthopoxvirus OPG001 family.

It is found in the secreted. Its function is as follows. Inhibits host immune defense by binding to host chemokines. Binds host CC chemokines (beta chemokines) such as RANTES with high affinity, but not CXC or C chemokines (alpha and gamma chemokines). The polypeptide is Chemokine-binding protein (OPG001) (Monkeypox virus).